The following is a 132-amino-acid chain: Small ribosomal subunit protein uS8 (132 aa).

It belongs to the universal ribosomal protein uS8 family. In terms of assembly, part of the 30S ribosomal subunit. Contacts proteins S5 and S12.

Functionally, one of the primary rRNA binding proteins, it binds directly to 16S rRNA central domain where it helps coordinate assembly of the platform of the 30S subunit. The chain is Small ribosomal subunit protein uS8 from Acidobacterium capsulatum (strain ATCC 51196 / DSM 11244 / BCRC 80197 / JCM 7670 / NBRC 15755 / NCIMB 13165 / 161).